A 227-amino-acid chain; its full sequence is Cytochrome c oxidase subunit 2 (227 aa).

At 1–14 the chain is on the mitochondrial intermembrane side; the sequence is MAYPFQLGLQDATS. A helical transmembrane segment spans residues 15-45; the sequence is PIMEELTNFHDHTLMIVFLISTLVLYIISLM. Residues 46 to 59 lie on the Mitochondrial matrix side of the membrane; the sequence is LTTKLTHTSTMDAQ. A helical membrane pass occupies residues 60-87; the sequence is EVETIWTILPAVILILIALPSLRILYMM. At 88–227 the chain is on the mitochondrial intermembrane side; the sequence is DEINNPVLTV…YFENWSASMI (140 aa). Positions 161, 196, 198, 200, 204, and 207 each coordinate Cu cation. Glu198 contacts Mg(2+). Tyr218 is modified (phosphotyrosine).

It belongs to the cytochrome c oxidase subunit 2 family. Component of the cytochrome c oxidase (complex IV, CIV), a multisubunit enzyme composed of 14 subunits. The complex is composed of a catalytic core of 3 subunits MT-CO1, MT-CO2 and MT-CO3, encoded in the mitochondrial DNA, and 11 supernumerary subunits COX4I, COX5A, COX5B, COX6A, COX6B, COX6C, COX7A, COX7B, COX7C, COX8 and NDUFA4, which are encoded in the nuclear genome. The complex exists as a monomer or a dimer and forms supercomplexes (SCs) in the inner mitochondrial membrane with NADH-ubiquinone oxidoreductase (complex I, CI) and ubiquinol-cytochrome c oxidoreductase (cytochrome b-c1 complex, complex III, CIII), resulting in different assemblies (supercomplex SCI(1)III(2)IV(1) and megacomplex MCI(2)III(2)IV(2)). Found in a complex with TMEM177, COA6, COX18, COX20, SCO1 and SCO2. Interacts with TMEM177 in a COX20-dependent manner. Interacts with COX20. Interacts with COX16. Requires Cu cation as cofactor.

Its subcellular location is the mitochondrion inner membrane. It carries out the reaction 4 Fe(II)-[cytochrome c] + O2 + 8 H(+)(in) = 4 Fe(III)-[cytochrome c] + 2 H2O + 4 H(+)(out). Its function is as follows. Component of the cytochrome c oxidase, the last enzyme in the mitochondrial electron transport chain which drives oxidative phosphorylation. The respiratory chain contains 3 multisubunit complexes succinate dehydrogenase (complex II, CII), ubiquinol-cytochrome c oxidoreductase (cytochrome b-c1 complex, complex III, CIII) and cytochrome c oxidase (complex IV, CIV), that cooperate to transfer electrons derived from NADH and succinate to molecular oxygen, creating an electrochemical gradient over the inner membrane that drives transmembrane transport and the ATP synthase. Cytochrome c oxidase is the component of the respiratory chain that catalyzes the reduction of oxygen to water. Electrons originating from reduced cytochrome c in the intermembrane space (IMS) are transferred via the dinuclear copper A center (CU(A)) of subunit 2 and heme A of subunit 1 to the active site in subunit 1, a binuclear center (BNC) formed by heme A3 and copper B (CU(B)). The BNC reduces molecular oxygen to 2 water molecules using 4 electrons from cytochrome c in the IMS and 4 protons from the mitochondrial matrix. The protein is Cytochrome c oxidase subunit 2 (MT-CO2) of Leopoldamys sabanus (Long-tailed giant rat).